The primary structure comprises 237 residues: Lysophospholipase-like protein 1 (237 aa).

Ala2 carries the post-translational modification N-acetylalanine. Catalysis depends on charge relay system residues Ser124, Asp179, and His211.

This sequence belongs to the AB hydrolase superfamily. AB hydrolase 2 family.

The protein localises to the cytoplasm. It is found in the cytosol. It catalyses the reaction S-hexadecanoyl-L-cysteinyl-[protein] + H2O = L-cysteinyl-[protein] + hexadecanoate + H(+). Its function is as follows. Palmitoyl thioesterase that catalyzes depalmitoylation of CGAS and KCNMA1. Acts as a regulator of innate immunity by mediating depalmitoylation of CGAS, thereby preventing CGAS homodimerization and cyclic GMP-AMP synthase activity. Does not exhibit phospholipase nor triacylglycerol lipase activity, able to hydrolyze only short chain substrates due to its shallow active site. In Pongo abelii (Sumatran orangutan), this protein is Lysophospholipase-like protein 1.